Consider the following 215-residue polypeptide: Probable phosphoglycerate mutase GpmB (215 aa).

Substrate is bound by residues 8-15 (RHGETQWN), 21-22 (QG), Arg58, Arg60, 82-85 (ELDM), 104-105 (RR), and 151-152 (GI). His9 (tele-phosphohistidine intermediate) is an active-site residue. The active-site Proton donor/acceptor is Glu82.

This sequence belongs to the phosphoglycerate mutase family. GpmB subfamily.

It catalyses the reaction (2R)-2-phosphoglycerate = (2R)-3-phosphoglycerate. It participates in carbohydrate degradation; glycolysis; pyruvate from D-glyceraldehyde 3-phosphate: step 3/5. The chain is Probable phosphoglycerate mutase GpmB from Citrobacter koseri (strain ATCC BAA-895 / CDC 4225-83 / SGSC4696).